Consider the following 69-residue polypeptide: DNA-directed RNA polymerase subunit omega (69 aa).

The protein belongs to the RNA polymerase subunit omega family. As to quaternary structure, the RNAP catalytic core consists of 2 alpha, 1 beta, 1 beta' and 1 omega subunit. When a sigma factor is associated with the core the holoenzyme is formed, which can initiate transcription.

It catalyses the reaction RNA(n) + a ribonucleoside 5'-triphosphate = RNA(n+1) + diphosphate. Promotes RNA polymerase assembly. Latches the N- and C-terminal regions of the beta' subunit thereby facilitating its interaction with the beta and alpha subunits. In Geotalea uraniireducens (strain Rf4) (Geobacter uraniireducens), this protein is DNA-directed RNA polymerase subunit omega.